A 462-amino-acid polypeptide reads, in one-letter code: Glycerol-3-phosphate dehydrogenase [NAD(+)] GPDHC1, cytosolic (462 aa).

NAD(+) contacts are provided by residues 48 to 53, Lys-196, and Ala-235; that span reads GAGAWG. Lys-196 serves as a coordination point for substrate. Lys-285 functions as the Proton acceptor in the catalytic mechanism. Residues Arg-347 and Gln-375 each coordinate NAD(+). 347 to 348 is a substrate binding site; it reads RN.

The protein belongs to the NAD-dependent glycerol-3-phosphate dehydrogenase family. As to expression, expressed in roots, leaves, flowers and siliques.

It is found in the cytoplasm. The protein resides in the cytosol. It carries out the reaction sn-glycerol 3-phosphate + NAD(+) = dihydroxyacetone phosphate + NADH + H(+). Involved in cell redox homeostasis. Required for maintaining a steady state cellular NADH/NAD(+) ratio through a mitochondrial glycerol-3-phosphate redox shuttle. May function with the mitochondrial FAD-dependent glycerol-3-phosphate dehydrogenase SDP6 to shuttle reducing equivalents into the mitochondria for respiration. The sequence is that of Glycerol-3-phosphate dehydrogenase [NAD(+)] GPDHC1, cytosolic (GPDHC1) from Arabidopsis thaliana (Mouse-ear cress).